The sequence spans 421 residues: Testin (421 aa).

Positions 92–199 (MILTNPVAAK…GDVKLPCEMD (108 aa)) constitute a PET domain. Residues 133–164 (EKQPVAGSEGAQYRKKQLAKQLPAHDQDPSKC) are disordered. The segment covering 155-164 (PAHDQDPSKC) has biased composition (basic and acidic residues). 3 LIM zinc-binding domains span residues 234–297 (YSCY…CDSE), 299–359 (PRCA…NHAV), and 362–421 (QGCH…KMMS).

It belongs to the prickle / espinas / testin family. Interacts via LIM domain 1 with ZYX. Interacts (via LIM domain 3) with ENAH and VASP. Interacts with ALKBH4, talin, actin, alpha-actinin, GRIP1 and PXN. Interacts (via LIM domain 2) with ACTL7A (via N-terminus). Heterodimer with ACTL7A; the heterodimer interacts with ENAH to form a heterotrimer.

Its subcellular location is the cytoplasm. It localises to the cell junction. The protein resides in the focal adhesion. Its function is as follows. Scaffold protein that may play a role in cell adhesion, cell spreading and in the reorganization of the actin cytoskeleton. Plays a role in the regulation of cell proliferation. May act as a tumor suppressor. This is Testin (TES) from Colobus guereza (Mantled guereza).